Reading from the N-terminus, the 224-residue chain is Elongation factor 1-beta (224 aa).

It belongs to the EF-1-beta/EF-1-delta family. As to quaternary structure, EF-1 is composed of 4 subunits: alpha, beta (1B-alpha=beta'), delta (1B-beta), and gamma (1B-gamma).

In terms of biological role, EF-1-beta and EF-1-beta' stimulate the exchange of GDP bound to EF-1-alpha to GTP. The protein is Elongation factor 1-beta of Oryza sativa subsp. japonica (Rice).